Consider the following 275-residue polypeptide: Trans-aconitate 2-methyltransferase (275 aa).

It belongs to the methyltransferase superfamily. Tam family.

It localises to the cytoplasm. It carries out the reaction trans-aconitate + S-adenosyl-L-methionine = (E)-3-(methoxycarbonyl)pent-2-enedioate + S-adenosyl-L-homocysteine. Its function is as follows. Catalyzes the S-adenosylmethionine monomethyl esterification of trans-aconitate. In Pseudomonas paraeruginosa (strain DSM 24068 / PA7) (Pseudomonas aeruginosa (strain PA7)), this protein is Trans-aconitate 2-methyltransferase.